A 157-amino-acid chain; its full sequence is Crossover junction endodeoxyribonuclease RuvC (157 aa).

Residues Asp9, Glu70, and Asp142 contribute to the active site. 3 residues coordinate Mg(2+): Asp9, Glu70, and Asp142.

The protein belongs to the RuvC family. In terms of assembly, homodimer which binds Holliday junction (HJ) DNA. The HJ becomes 2-fold symmetrical on binding to RuvC with unstacked arms; it has a different conformation from HJ DNA in complex with RuvA. In the full resolvosome a probable DNA-RuvA(4)-RuvB(12)-RuvC(2) complex forms which resolves the HJ. The cofactor is Mg(2+).

The protein resides in the cytoplasm. The enzyme catalyses Endonucleolytic cleavage at a junction such as a reciprocal single-stranded crossover between two homologous DNA duplexes (Holliday junction).. Its function is as follows. The RuvA-RuvB-RuvC complex processes Holliday junction (HJ) DNA during genetic recombination and DNA repair. Endonuclease that resolves HJ intermediates. Cleaves cruciform DNA by making single-stranded nicks across the HJ at symmetrical positions within the homologous arms, yielding a 5'-phosphate and a 3'-hydroxyl group; requires a central core of homology in the junction. The consensus cleavage sequence is 5'-(A/T)TT(C/G)-3'. Cleavage occurs on the 3'-side of the TT dinucleotide at the point of strand exchange. HJ branch migration catalyzed by RuvA-RuvB allows RuvC to scan DNA until it finds its consensus sequence, where it cleaves and resolves the cruciform DNA. This is Crossover junction endodeoxyribonuclease RuvC from Cyanothece sp. (strain PCC 7425 / ATCC 29141).